The following is a 426-amino-acid chain: Alpha/beta hydrolase pydG (426 aa).

This sequence belongs to the AB hydrolase superfamily. In terms of assembly, homodimer.

It functions in the pathway mycotoxin biosynthesis. Alpha/beta hydrolasee; part of the gene cluster that mediates the biosynthesis of pyrrocidines, fungal natural products containing a macrocyclic para-cyclophane connected to a decahydrofluorene ring system that show potent antibiotic activities toward Gram-negative bacteria. Within the pathway, pydG catalyzes the Knoevenagel condensation that affords the 3-pyrrolin-2-one ring, using as substrate the polyketide-tyrosyl acyl thioester product of pydA. The pathway begins with the PKS-NRPS pydA which, with the help of the trans-enoyl reductase pydC, synthesizes the polyketide-tyrosyl acyl thioester product which can be reductively off-loaded by the terminal reductase (R) domain in pydA. The alpha/beta hydrolase pydG is then required to catalyze the subsequent Knoevenagel condensation that affords the 3-pyrrolin-2-one ring, whereas the four proteins pydB, pydE, pydX and pydZ then function synergistically to form the cyclophane. PydB and the membrane-bound pydX and pydZ are lipid-binding proteins that can sequester and mold the pdyG product into the inverse S-shape. Binding of the medium chain reductase pydE to the complex would trigger the cascade oxidative cyclization. PydY is involved in the Diels-Alder cycloaddition that forms the decahydrofluorene core. Additional non-enzymatic hydroxylation yields pyrrocidine A2 which can be further reduced into pyrrocidine B by an endogenous reductase. The chain is Alpha/beta hydrolase pydG from Acremonium sp.